A 257-amino-acid chain; its full sequence is Snake venom serine protease KN2 (257 aa).

The N-terminal stretch at 1–18 is a signal peptide; that stretch reads MVLIRVLANLLILQLSYA. Residues 19–24 constitute a propeptide that is removed on maturation; sequence QKSSEL. Positions 25 to 248 constitute a Peptidase S1 domain; that stretch reads VIGGHPCNIN…HLDWIKSIIA (224 aa). Disulfide bonds link Cys-31/Cys-162, Cys-49/Cys-65, Cys-97/Cys-255, Cys-141/Cys-209, Cys-173/Cys-188, and Cys-199/Cys-224. Catalysis depends on charge relay system residues His-64 and Asp-109. N-linked (GlcNAc...) asparagine glycosylation is found at Asn-120 and Asn-121. Ser-203 acts as the Charge relay system in catalysis.

The protein belongs to the peptidase S1 family. Snake venom subfamily. As to quaternary structure, monomer. Expressed by the venom gland.

The protein localises to the secreted. In terms of biological role, snake venom serine protease that may act in the hemostasis system of the prey. The chain is Snake venom serine protease KN2 from Trimeresurus stejnegeri (Chinese green tree viper).